Here is a 273-residue protein sequence, read N- to C-terminus: Thioredoxin-like 1-3, chloroplastic (273 aa).

A chloroplast-targeting transit peptide spans 1 to 44 (MATDSFIKLNPISFNRARFDLRDFAGISPKSISSLCCISPRLIS). One can recognise a Thioredoxin domain in the interval 62–202 (LFSKKKIPAF…FKEALEKHGR (141 aa)). Residues Cys-125 and Cys-128 each act as nucleophile in the active site. Cys-125 and Cys-128 form a disulfide bridge.

The protein belongs to the thioredoxin family.

The protein resides in the plastid. It localises to the chloroplast. Its function is as follows. Probable thiol-disulfide oxidoreductase that may participate in various redox reactions. This is Thioredoxin-like 1-3, chloroplastic from Arabidopsis thaliana (Mouse-ear cress).